The chain runs to 481 residues: Beta-amyrin 16-beta-monooxygenase (481 aa).

The chain crosses the membrane as a helical span at residues 4-24 (LFIIISLVIVILTTIFILSNL). Position 428 (cysteine 428) interacts with heme.

It belongs to the cytochrome P450 family. Heme is required as a cofactor. As to expression, highly expressed in roots. Expressed at very low levels in leaves and petals.

It is found in the membrane. It catalyses the reaction beta-amyrin + reduced [NADPH--hemoprotein reductase] + O2 = maniladiol + oxidized [NADPH--hemoprotein reductase] + H2O + H(+). The catalysed reaction is oleanolate + reduced [NADPH--hemoprotein reductase] + O2 = cochalate + oxidized [NADPH--hemoprotein reductase] + H2O + H(+). Functionally, involved in triterpenoid saponin biosynthesis in roots. Catalyzes the hydroxylation of beta-amyrin at the C-16 beta position to form maniladiol. Is also able to oxidize oleanolat to cochalate. Has weak activity catalyzing the three-step oxidation at C-28 of beta-amyrin to form oleanolate. The protein is Beta-amyrin 16-beta-monooxygenase of Platycodon grandiflorus (Balloon flower).